A 210-amino-acid polypeptide reads, in one-letter code: Synaptosomal-associated protein 25 (210 aa).

Residues 1–23 form a disordered region; the sequence is MENSVENSMDPRSEQEEMQRCAD. Residues 9–20 are compositionally biased toward basic and acidic residues; it reads MDPRSEQEEMQR. T-SNARE coiled-coil homology domains lie at 23–85 and 147–209; these read DQIT…LSDL and DARE…ATKM.

The protein belongs to the SNAP-25 family.

It is found in the synapse. The protein localises to the synaptosome. Its subcellular location is the cell membrane. Its function is as follows. May play an important role in the synaptic function of specific neuronal systems. Associates with proteins involved in vesicle docking and membrane fusion. This Torpedo marmorata (Marbled electric ray) protein is Synaptosomal-associated protein 25 (snap25).